A 292-amino-acid polypeptide reads, in one-letter code: Formamidopyrimidine-DNA glycosylase (292 aa).

The active-site Schiff-base intermediate with DNA is P2. E3 (proton donor) is an active-site residue. K61 acts as the Proton donor; for beta-elimination activity in catalysis. The DNA site is built by H103, R122, and K168. Residues 254 to 288 (DAYGREGEHCRRCGAVMRREKFMNRSSFYCPRCQP) form an FPG-type zinc finger. Catalysis depends on R278, which acts as the Proton donor; for delta-elimination activity.

This sequence belongs to the FPG family. As to quaternary structure, monomer. It depends on Zn(2+) as a cofactor.

It catalyses the reaction Hydrolysis of DNA containing ring-opened 7-methylguanine residues, releasing 2,6-diamino-4-hydroxy-5-(N-methyl)formamidopyrimidine.. It carries out the reaction 2'-deoxyribonucleotide-(2'-deoxyribose 5'-phosphate)-2'-deoxyribonucleotide-DNA = a 3'-end 2'-deoxyribonucleotide-(2,3-dehydro-2,3-deoxyribose 5'-phosphate)-DNA + a 5'-end 5'-phospho-2'-deoxyribonucleoside-DNA + H(+). Its function is as follows. Involved in base excision repair of DNA damaged by oxidation or by mutagenic agents. Acts as a DNA glycosylase that recognizes and removes damaged bases. Has a preference for oxidized purines, such as 7,8-dihydro-8-oxoguanine (8-oxoG). Has AP (apurinic/apyrimidinic) lyase activity and introduces nicks in the DNA strand. Cleaves the DNA backbone by beta-delta elimination to generate a single-strand break at the site of the removed base with both 3'- and 5'-phosphates. The sequence is that of Formamidopyrimidine-DNA glycosylase from Mycobacterium ulcerans (strain Agy99).